Reading from the N-terminus, the 710-residue chain is Secretin OutD (710 aa).

The first 27 residues, 1-27, serve as a signal peptide directing secretion; it reads MLGKGIKKSWGWLGLTVLLLGSPCGWA. Residues 28-105 form an N0 region; sequence AEFSASFKGT…DNGVLKVIRS (78 aa). The interval 123–190 is N1; sequence IGDELVTRVV…DIVNTVDKTG (68 aa). The segment at 192–262 is N2; the sequence is REMVTVPLTY…VEMIRQLDRK (71 aa). Residues 288-399 form an N3 region; it reads GNGTSGNRNS…INQLDIRRPQ (112 aa). The disordered stretch occupies residues 289–353; sequence NGTSGNRNSS…AFGSTSSSGG (65 aa). The tract at residues 401–648 is secretin; that stretch reads LVEAIIAEIQ…MLFLRPTIIR (248 aa). The segment at 691–710 is s domain; that stretch reads TYTFRQVQSSISDFYKPEGR.

The protein belongs to the bacterial secretin family. GSP D subfamily. As to quaternary structure, forms a cylindrical channel with 15 subunits. Interacts with pilotin OutS.

It is found in the cell outer membrane. Functionally, involved in a type II secretion system (T2SS, formerly general secretion pathway, GSP) for the export of proteins. Required for the translocation of the multiple pectic enzymes. This subunit forms the outer membrane channel. The protein is Secretin OutD (outD) of Dickeya dadantii (strain 3937) (Erwinia chrysanthemi (strain 3937)).